The chain runs to 1005 residues: Vacuolar membrane protease (1005 aa).

Residues 1–14 (MAKETTARSILGYQ) lie on the Cytoplasmic side of the membrane. A helical transmembrane segment spans residues 15-35 (TLPTTALIALIYVVAFFSVLV). Over 36–353 (SDQLPSIPHP…PEDSAKQKSK (318 aa)) the chain is Vacuolar. An N-linked (GlcNAc...) asparagine glycan is attached at N107. H152 and D164 together coordinate Zn(2+). E196 serves as the catalytic Proton acceptor. Residue E197 coordinates Zn(2+). Residue N213 is glycosylated (N-linked (GlcNAc...) asparagine). Positions 222 and 311 each coordinate Zn(2+). Residues 354–374 (PGVYFDRPVVLALLWAIGAVL) traverse the membrane as a helical segment. Topologically, residues 375–448 (KHNAGSPPPP…LITVWKQASF (74 aa)) are cytoplasmic. Positions 379–420 (GSPPPPPKPTVPHSANNASAGTGRPGASTRQPTRSFGSNEDA) are disordered. A compositionally biased stretch (polar residues) spans 406–419 (STRQPTRSFGSNED). The helical transmembrane segment at 449-469 (WIALIVTVGLQALLAWGYVAI) threads the bilayer. Residues 470-479 (NPFTIYSRPY) lie on the Vacuolar side of the membrane. Residues 480-500 (FVLLSFFALSFFSMTLVLQAA) form a helical membrane-spanning segment. Residues 501-519 (FPSSPVKHAIEVREQEKTT) are Cytoplasmic-facing. Residues 520–540 (ILLHLHLLSWIALLLSTILIG) traverse the membrane as a helical segment. The Vacuolar segment spans residues 541–543 (KSQ). Residues 544-564 (VGSFYVVTVWYLGIWAATVIG) form a helical membrane-spanning segment. Over 565 to 644 (TLQPILVSKR…RKTNSKSKED (80 aa)) the chain is Cytoplasmic. The disordered stretch occupies residues 577-640 (DKGKRRARRS…ASNRRKTNSK (64 aa)). Over residues 588–606 (SASTSSSSSSSSSSSSGSD) the composition is skewed to low complexity. Residues 645–665 (GAIGWWIAQVLLTVPPVVMLV) traverse the membrane as a helical segment. The Vacuolar portion of the chain corresponds to 666–686 (GQITSIVLEAMNQTLTDGNSA). An N-linked (GlcNAc...) asparagine glycan is attached at N677. The helical transmembrane segment at 687 to 707 (WSIYLLTALLATMLVLPVAPF) threads the bilayer. Topologically, residues 708–713 (SPKLHR) are cytoplasmic. The chain crosses the membrane as a helical span at residues 714 to 734 (GLIFLSAAVFVGFTIYLWVVF). Residues 735 to 1005 (PFTRQDPFKV…VEASAPFTVV (271 aa)) lie on the Vacuolar side of the membrane. N761 and N961 each carry an N-linked (GlcNAc...) asparagine glycan.

The protein belongs to the peptidase M28 family. The cofactor is Zn(2+).

The protein localises to the vacuole membrane. Functionally, may be involved in vacuolar sorting and osmoregulation. The chain is Vacuolar membrane protease from Coprinopsis cinerea (strain Okayama-7 / 130 / ATCC MYA-4618 / FGSC 9003) (Inky cap fungus).